Reading from the N-terminus, the 459-residue chain is Elongation factor 1-alpha 2 (459 aa).

In terms of domain architecture, tr-type G spans K5–T242. The segment at G14 to S21 is G1. Positions G70 to D74 are G2. The segment at D91–G94 is G3. The tract at residues N153 to D156 is G4. The G5 stretch occupies residues S194 to F196. Residues E301 and E374 each carry the 5-glutamyl glycerylphosphorylethanolamine modification.

The protein belongs to the TRAFAC class translation factor GTPase superfamily. Classic translation factor GTPase family. EF-Tu/EF-1A subfamily.

It localises to the cytoplasm. Functionally, this protein promotes the GTP-dependent binding of aminoacyl-tRNA to the A-site of ribosomes during protein biosynthesis. This chain is Elongation factor 1-alpha 2 (eft-2), found in Oscheius tipulae.